Reading from the N-terminus, the 98-residue chain is Large ribosomal subunit protein uL23 (98 aa).

This sequence belongs to the universal ribosomal protein uL23 family. In terms of assembly, part of the 50S ribosomal subunit. Contacts protein L29, and trigger factor when it is bound to the ribosome.

In terms of biological role, one of the early assembly proteins it binds 23S rRNA. One of the proteins that surrounds the polypeptide exit tunnel on the outside of the ribosome. Forms the main docking site for trigger factor binding to the ribosome. The polypeptide is Large ribosomal subunit protein uL23 (Lactobacillus delbrueckii subsp. bulgaricus (strain ATCC 11842 / DSM 20081 / BCRC 10696 / JCM 1002 / NBRC 13953 / NCIMB 11778 / NCTC 12712 / WDCM 00102 / Lb 14)).